The chain runs to 158 residues: Small ribosomal subunit protein uS9 (158 aa).

The disordered stretch occupies residues 1-20 (MTEAVETETVEPTTDEATAA). Over residues 10-20 (VEPTTDEATAA) the composition is skewed to low complexity.

It belongs to the universal ribosomal protein uS9 family.

The sequence is that of Small ribosomal subunit protein uS9 from Mycobacterium sp. (strain JLS).